Reading from the N-terminus, the 179-residue chain is Dual-action ribosomal maturation protein DarP (179 aa).

The protein belongs to the DarP family.

The protein resides in the cytoplasm. Its function is as follows. Member of a network of 50S ribosomal subunit biogenesis factors which assembles along the 30S-50S interface, preventing incorrect 23S rRNA structures from forming. Promotes peptidyl transferase center (PTC) maturation. This Photorhabdus laumondii subsp. laumondii (strain DSM 15139 / CIP 105565 / TT01) (Photorhabdus luminescens subsp. laumondii) protein is Dual-action ribosomal maturation protein DarP.